The chain runs to 279 residues: Shikimate dehydrogenase (NADP(+)) (279 aa).

Shikimate contacts are provided by residues 21–23 (SRS) and Thr68. Lys72 serves as the catalytic Proton acceptor. Asp83 serves as a coordination point for NADP(+). Shikimate is bound by residues Asn92 and Asp107. NADP(+) contacts are provided by residues 132–136 (GAGGA), 156–161 (NRTVER), and Leu221. Tyr223 contributes to the shikimate binding site. NADP(+) is bound at residue Gly244.

Belongs to the shikimate dehydrogenase family. As to quaternary structure, homodimer.

The enzyme catalyses shikimate + NADP(+) = 3-dehydroshikimate + NADPH + H(+). It participates in metabolic intermediate biosynthesis; chorismate biosynthesis; chorismate from D-erythrose 4-phosphate and phosphoenolpyruvate: step 4/7. Involved in the biosynthesis of the chorismate, which leads to the biosynthesis of aromatic amino acids. Catalyzes the reversible NADPH linked reduction of 3-dehydroshikimate (DHSA) to yield shikimate (SA). The chain is Shikimate dehydrogenase (NADP(+)) from Nitrobacter winogradskyi (strain ATCC 25391 / DSM 10237 / CIP 104748 / NCIMB 11846 / Nb-255).